A 410-amino-acid chain; its full sequence is MSDYEPLRLHVPEPTGRPGCKTDFSYLHLSPAGEVRKPPVDVEPAETSDLAYSLVRVLDDDGHAVGPWNPQLSNEQLLRGMRAMLKTRLFDARMLTAQRQKKLSFYMQCLGEEAIATAHTLALRDGDMCFPTYRQQGILITREYPLVDMICQLLSNEADPLKGRQLPIMYSSKEAGFFSISGNLATQFIQAVGWGMASAIKGDTRIASAWIGDGATAESDFHTALTFAHVYRAPVILNVVNNQWAISTFQAIAGGEGTTFANRGVGCGIASLRVDGNDFLAVYAASEWAAERARRNLGPSLIEWVTYRAGPHSTSDDPSKYRPADDWTNFPLGDPIARLKRHMIGLGIWSEEQHEATHKALEAEVLAAQKQAESHGTLIDGRVPSAASMFEDVYAELPEHLRRQRQELGV.

It belongs to the BCKDHA family. Heterodimer of an alpha and a beta chain. It depends on thiamine diphosphate as a cofactor.

It catalyses the reaction N(6)-[(R)-lipoyl]-L-lysyl-[protein] + 3-methyl-2-oxobutanoate + H(+) = N(6)-[(R)-S(8)-2-methylpropanoyldihydrolipoyl]-L-lysyl-[protein] + CO2. In terms of biological role, the branched-chain alpha-keto dehydrogenase complex catalyzes the overall conversion of alpha-keto acids to acyl-CoA and CO(2). It contains multiple copies of three enzymatic components: branched-chain alpha-keto acid decarboxylase (E1), lipoamide acyltransferase (E2) and lipoamide dehydrogenase (E3). The polypeptide is 2-oxoisovalerate dehydrogenase subunit alpha (bkdA1) (Pseudomonas aeruginosa (strain ATCC 15692 / DSM 22644 / CIP 104116 / JCM 14847 / LMG 12228 / 1C / PRS 101 / PAO1)).